Reading from the N-terminus, the 538-residue chain is ATP synthase subunit beta, mitochondrial (538 aa).

215–222 contacts ATP; it reads GGAGVGKT.

This sequence belongs to the ATPase alpha/beta chains family. Subunit of the F-type ATPase which has 2 components, CF(1) - the catalytic core - and CF(0) - the membrane proton channel. Interacts (via N-terminus) with lov-1 (via PLAT domain). Expressed in three categories of adult male sensory neurons: tail ray B neurons, HOB hook neuron and head cephalic (CEM) neurons.

The protein resides in the cell projection. The protein localises to the cilium. It localises to the mitochondrion. Its subcellular location is the mitochondrion inner membrane. The enzyme catalyses ATP + H2O + 4 H(+)(in) = ADP + phosphate + 5 H(+)(out). In terms of biological role, mitochondrial membrane ATP synthase (F(1)F(0) ATP synthase or Complex V) produces ATP from ADP in the presence of a proton gradient across the membrane which is generated by electron transport complexes of the respiratory chain. F-type ATPases consist of two structural domains, F(1) - containing the extramembraneous catalytic core, and F(0) - containing the membrane proton channel, linked together by a central stalk and a peripheral stalk. During catalysis, ATP synthesis in the catalytic domain of F(1) is coupled via a rotary mechanism of the central stalk subunits to proton translocation. Subunits alpha and beta form the catalytic core in F(1). Rotation of the central stalk against the surrounding subunits leads to hydrolysis of ATP in three separate catalytic sites on the beta subunits. Required during male mating behavior for the response to hermaphrodite contact, acting with lov-1 and pkd-2. May be involved in polycystin signaling. The polypeptide is ATP synthase subunit beta, mitochondrial (Caenorhabditis elegans).